We begin with the raw amino-acid sequence, 895 residues long: Protein translocase subunit SecA (895 aa).

ATP-binding positions include Gln90, 108-112 (GEGKS), and Asp498.

This sequence belongs to the SecA family.

The protein localises to the plastid. The protein resides in the chloroplast stroma. It localises to the chloroplast thylakoid membrane. The catalysed reaction is ATP + H2O + cellular proteinSide 1 = ADP + phosphate + cellular proteinSide 2.. Its function is as follows. Has a central role in coupling the hydrolysis of ATP to the transfer of proteins across the thylakoid membrane. This Cyanidium caldarium (Red alga) protein is Protein translocase subunit SecA.